The chain runs to 320 residues: Retron Ec86 reverse transcriptase (320 aa).

Residues 34 to 248 form the Reverse transcriptase domain; that stretch reads VETLRLLIYT…SQRKVTGLVI (215 aa). Residues Asp-119, Asp-197, and Asp-198 each coordinate Mg(2+). Residues 230–320 form a necessary and required for recognition and binding of RNA region; the sequence is KKTCISGPRS…GKNPLNKAKT (91 aa).

It belongs to the bacterial reverse transcriptase family.

It catalyses the reaction DNA(n) + a 2'-deoxyribonucleoside 5'-triphosphate = DNA(n+1) + diphosphate. Reverse transcriptase (RT) component of antiviral defense system retron Ec86, composed of a non-coding RNA (ncRNA), a ribosyltransferase/DNA-binding protein and this RT. Expression of the 3-gene retron confers protection against bacteriophage T5. At multiplicity of infection (MOI) of 0.02 cultures grow normally when infected with T5 without collapsing, at MOI 2 cultures enter growth stasis. Responsible for synthesis of msDNA (a branched molecule with RNA linked by a 2',5'-phosphodiester bond to ssDNA). The retron transcript serves as primer (from a conserved internal G residue) and template for the reaction, and codes for the RT. Recognizes only its cognate RNA as a primer template. Overexpression of the ncRNA and RT (without the ribosyltransferase), which leads to increased levels of msDNA, is mutagenic in vivo. This may be due to a mismatch in the msDNA stem which binds and sequesters MutS and/or MutL. The protein is Retron Ec86 reverse transcriptase of Escherichia coli.